The primary structure comprises 186 residues: Ribosome-recycling factor (186 aa).

Belongs to the RRF family.

It is found in the cytoplasm. Its function is as follows. Responsible for the release of ribosomes from messenger RNA at the termination of protein biosynthesis. May increase the efficiency of translation by recycling ribosomes from one round of translation to another. The polypeptide is Ribosome-recycling factor (Azorhizobium caulinodans (strain ATCC 43989 / DSM 5975 / JCM 20966 / LMG 6465 / NBRC 14845 / NCIMB 13405 / ORS 571)).